Consider the following 242-residue polypeptide: 7-cyano-7-deazaguanine synthase (242 aa).

Residue 12–22 (FSGGQDSATCL) participates in ATP binding. 4 residues coordinate Zn(2+): cysteine 200, cysteine 215, cysteine 218, and cysteine 221.

Belongs to the QueC family. The cofactor is Zn(2+).

The catalysed reaction is 7-carboxy-7-deazaguanine + NH4(+) + ATP = 7-cyano-7-deazaguanine + ADP + phosphate + H2O + H(+). It functions in the pathway purine metabolism; 7-cyano-7-deazaguanine biosynthesis. Functionally, catalyzes the ATP-dependent conversion of 7-carboxy-7-deazaguanine (CDG) to 7-cyano-7-deazaguanine (preQ(0)). This Gluconobacter oxydans (strain 621H) (Gluconobacter suboxydans) protein is 7-cyano-7-deazaguanine synthase.